We begin with the raw amino-acid sequence, 548 residues long: Acetolactate synthase isozyme 2 large subunit (548 aa).

E47 contributes to the thiamine diphosphate binding site. FAD contacts are provided by residues R149, 251-272, and 294-313; these read HGTK…VGAR and DIDP…LQGD. The interval 377-457 is thiamine pyrophosphate binding; it reads QHQMWAAQHI…LKIVLLDNQR (81 aa). 2 residues coordinate Mg(2+): D428 and N455.

It belongs to the TPP enzyme family. As to quaternary structure, tetramer of two large (IlvG) and two small (IlvM) chains. FAD is required as a cofactor. It depends on Mg(2+) as a cofactor. Requires thiamine diphosphate as cofactor.

It catalyses the reaction 2 pyruvate + H(+) = (2S)-2-acetolactate + CO2. It participates in amino-acid biosynthesis; L-isoleucine biosynthesis; L-isoleucine from 2-oxobutanoate: step 1/4. Its pathway is amino-acid biosynthesis; L-valine biosynthesis; L-valine from pyruvate: step 1/4. Inhibited by the herbicides chlorimuron ethyl, chlorsulfuron and imazapyr. Functionally, catalyzes the first step in the biosynthesis of branched-chain amino acids. This is Acetolactate synthase isozyme 2 large subunit (ilvG) from Escherichia coli (strain K12).